The primary structure comprises 955 residues: MAPHQNVRPETVLKRTDELIAVGQQDAALELLHETVSARKARTTSVATLEPIVARFVQLSVDLRKGKIIKDGLHQYKKIVQSTNVNAIEPVIKQFLSLAEQRVTDAQAQADKIADEEEADDLEAEETPEDLLLATVSSEDTKDRTDRRVVTPWLKFLWEAYRSVLDVLRNNSKLEVIYQQVVEQAFNFCLKFSRKTEFRRLCELLRSHLQTTAQKGPNAPPVTATSVDLSDADTLQRYLDTRFSQLNVAVKLELWQEAFRSVEDVHTLLTVSKRPAKPLMMGNYYENLARIFLVAGNYLFHAAAWNKLFHLLSQSPRGAIPVSEYQRVASFVLLSALAIPHNSSAEDRYRNTRLTGLLNLQRTPTRDALLKSALSRNILAHVKPEIKALYKTLEVDFHPLSIRAKLTPVVGAIAEAPEFKPYFAPLYQVILTRLFQQLSQVYESVKLDFVIQLATFPAPFSATPLEIEQFIVRACAQGELAIKIDHDQRSVLFEEVRAATGSASLQDTPIEIVRTQLSRLGRTLSVADPLNSAEAREQQYVAALTTAQDNAEREHAETLARRAEIEARKAQAEAERAQREEEEARKRAQRLLDEELAEKERLAAEQHARELERIRKEQDAIREEEKKKLAEEINAKGIITIDLDKLEGLDTNALRKMQVDQLAKETKELGDRLRVTARRIDHTERAYRMEEIKLVEDDFVKQKQRDREIYDTRIKLIKDTAKAEHDAKVELAKRLQRAVPFYKSFRDDIRVKREAEFTRLREEAVKNLAEAKAARIEEVKAKRIADAKRAEEEAKAAAEAEAKAAAEAEAKAKAEQEMREKLLAEKKAREEANARADAAYEKQRQKEAELEAKLEAKRAGFSGAGRQAPPSGGYVPPSRREGGYVPPSRRGDAGAAPGAGSGGYTPPSRREGGGGGYVPPSRREGGGGGYVPPSRREGGSGAGSGGRYIPPSQRN.

A coiled-coil region spans residues 96–127 (LSLAEQRVTDAQAQADKIADEEEADDLEAEET). Residues 325-498 (YQRVASFVLL…RSVLFEEVRA (174 aa)) enclose the PCI domain. Coiled-coil stretches lie at residues 533-636 (AEAR…INAK) and 752-860 (KREA…KRAG). Basic and acidic residues predominate over residues 789 to 858 (RAEEEAKAAA…ELEAKLEAKR (70 aa)). The tract at residues 789-955 (RAEEEAKAAA…GRYIPPSQRN (167 aa)) is disordered.

Belongs to the eIF-3 subunit A family. As to quaternary structure, component of the eukaryotic translation initiation factor 3 (eIF-3) complex.

It is found in the cytoplasm. RNA-binding component of the eukaryotic translation initiation factor 3 (eIF-3) complex, which is involved in protein synthesis of a specialized repertoire of mRNAs and, together with other initiation factors, stimulates binding of mRNA and methionyl-tRNAi to the 40S ribosome. The eIF-3 complex specifically targets and initiates translation of a subset of mRNAs involved in cell proliferation. This Yarrowia lipolytica (strain CLIB 122 / E 150) (Yeast) protein is Eukaryotic translation initiation factor 3 subunit A.